A 440-amino-acid chain; its full sequence is Probable D-serine dehydratase (440 aa).

Lysine 120 carries the post-translational modification N6-(pyridoxal phosphate)lysine.

The protein belongs to the serine/threonine dehydratase family. DsdA subfamily. Pyridoxal 5'-phosphate is required as a cofactor.

It catalyses the reaction D-serine = pyruvate + NH4(+). The protein is Probable D-serine dehydratase of Shouchella clausii (strain KSM-K16) (Alkalihalobacillus clausii).